A 161-amino-acid chain; its full sequence is Globin CTT-IX (161 aa).

The first 16 residues, 1-16 (MKFFIVLALCIVGAIA), serve as a signal peptide directing secretion. The Globin domain occupies 18-161 (PVSSDQANAI…NIFGMIFAHL (144 aa)). Heme b contacts are provided by His76 and His111.

The protein belongs to the globin family. Homodimer.

The protein is Globin CTT-IX (CTT-9) of Chironomus thummi thummi (Midge).